The primary structure comprises 62 residues: Pro-MCH variant (62 aa).

Residues 23–41 (GSVAFPAENGVQDTESTQE) form an NGE-like region. Positions 28 to 62 (PAENGVQDTESTQEKRETGDEENSAQFPIGRRDFD) are disordered. Residues 44–56 (ETGDEENSAQFPI) form an NEI-like region. A melanin-concentrating hormone-like region spans residues 60-62 (DFD).

It belongs to the melanin-concentrating hormone family.

This chain is Pro-MCH variant (PMCHL1), found in Hylobates lar (Lar gibbon).